The chain runs to 463 residues: Hexose-6-phosphate:phosphate antiporter (463 aa).

Residues 1–24 are Cytoplasmic-facing; it reads MLAFLNQVRKPTLDLPLDVRRKMW. A helical transmembrane segment spans residues 25–45; sequence FKPFMQSYLVVFIGYLTMYLI. At 46–60 the chain is on the periplasmic side; it reads RKNFNIAQNDMISTY. The helical transmembrane segment at 61–81 threads the bilayer; it reads GLSMTELGMIGLGFSITYGVG. Residues 82–96 lie on the Cytoplasmic side of the membrane; sequence KTLVSYYADGKNTKQ. Residues 97–117 form a helical membrane-spanning segment; that stretch reads FLPFMLILSAICMLGFSASMG. Residues 118–122 lie on the Periplasmic side of the membrane; that stretch reads AGSTS. Residues 123-143 traverse the membrane as a helical segment; sequence LFLMIAFYALSGFFQSTGGSC. At 144 to 159 the chain is on the cytoplasmic side; sequence SYSTITKWTPRRKRGT. Residues 160-180 form a helical membrane-spanning segment; it reads FLGFWNISHNLGGAGAAGVAL. The Periplasmic segment spans residues 181 to 189; that stretch reads FGANYLFDG. The chain crosses the membrane as a helical span at residues 190–210; it reads HVIGMFIFPSIIALIVGFIGL. Topologically, residues 211-259 are cytoplasmic; the sequence is RFGSDSPESYGLGKAEELFGEEISEEDKETEENEMTKWQIFVEYVLKNK. The chain crosses the membrane as a helical span at residues 260–280; that stretch reads VIWLLCFSNIFLYVVRIGIDQ. At 281–297 the chain is on the periplasmic side; that stretch reads WSTVYAFQELKLSKEVA. Residues 298-318 traverse the membrane as a helical segment; sequence IQGFTLFEVGALVGTLLWGWL. Residues 319-326 are Cytoplasmic-facing; that stretch reads SDLANGRR. The helical transmembrane segment at 327–347 threads the bilayer; it reads ALVACVALALIIATLGVYQHA. Topologically, residues 348 to 357 are periplasmic; the sequence is SNQYVYLASL. Residues 358–378 form a helical membrane-spanning segment; that stretch reads FALGFLVFGPQLLIGVAAVGF. The Cytoplasmic segment spans residues 379–382; that stretch reads VPKK. A helical membrane pass occupies residues 383–403; sequence AIGAADGIKGTFAYLIGDSFA. Residues 404-425 are Periplasmic-facing; sequence KLGLGMIADGTPVFGLTGWAGT. A helical transmembrane segment spans residues 426–446; the sequence is FAALDAAAIGCICLMAMVAVM. Topologically, residues 447-463 are cytoplasmic; sequence EERKIRREKKIQQVNIA.

This sequence belongs to the major facilitator superfamily. Organophosphate:Pi antiporter (OPA) (TC 2.A.1.4) family.

It localises to the cell inner membrane. Functionally, mediates the exchange of external hexose 6-phosphate and internal inorganic phosphate. The protein is Hexose-6-phosphate:phosphate antiporter (uhpT) of Salmonella typhimurium (strain LT2 / SGSC1412 / ATCC 700720).